We begin with the raw amino-acid sequence, 190 residues long: Ganglioside GM2 activator (190 aa).

Positions 1–23 (MQSLMQAPVLIALGLLFAAPAQA) are cleaved as a signal peptide. Intrachain disulfides connect Cys36/Cys180, Cys96/Cys103, Cys109/Cys135, and Cys122/Cys133. A glycan (N-linked (GlcNAc...) asparagine) is linked at Asn60.

It localises to the lysosome. The catalysed reaction is cholesterol(in) = cholesterol(out). Functionally, the large binding pocket can accommodate several single chain phospholipids and fatty acids, GM2A also exhibits some calcium-independent phospholipase activity. Binds gangliosides and stimulates ganglioside GM2 degradation. It stimulates only the breakdown of ganglioside GM2 and glycolipid GA2 by beta-hexosaminidase A. It extracts single GM2 molecules from membranes and presents them in soluble form to beta-hexosaminidase A for cleavage of N-acetyl-D-galactosamine and conversion to GM3. Has cholesterol transfer activity. This chain is Ganglioside GM2 activator (GM2A), found in Macaca fascicularis (Crab-eating macaque).